A 389-amino-acid polypeptide reads, in one-letter code: PqqA peptide cyclase (389 aa).

Residues 19-234 (VGLPLWLLAE…TNEYRDQLAA (216 aa)) enclose the Radical SAM core domain. [4Fe-4S] cluster-binding residues include Cys-33, Cys-37, and Cys-40.

It belongs to the radical SAM superfamily. PqqE family. In terms of assembly, interacts with PqqD. The interaction is necessary for activity of PqqE. [4Fe-4S] cluster serves as cofactor.

The enzyme catalyses [PQQ precursor protein] + S-adenosyl-L-methionine = E-Y cross-linked-[PQQ precursor protein] + 5'-deoxyadenosine + L-methionine + H(+). Its pathway is cofactor biosynthesis; pyrroloquinoline quinone biosynthesis. Functionally, catalyzes the cross-linking of a glutamate residue and a tyrosine residue in the PqqA protein as part of the biosynthesis of pyrroloquinoline quinone (PQQ). The chain is PqqA peptide cyclase from Pseudomonas syringae pv. tomato (strain ATCC BAA-871 / DC3000).